The chain runs to 176 residues: Protein GrpE (176 aa).

This sequence belongs to the GrpE family. As to quaternary structure, homodimer.

Its subcellular location is the cytoplasm. Its function is as follows. Participates actively in the response to hyperosmotic and heat shock by preventing the aggregation of stress-denatured proteins, in association with DnaK and GrpE. It is the nucleotide exchange factor for DnaK and may function as a thermosensor. Unfolded proteins bind initially to DnaJ; upon interaction with the DnaJ-bound protein, DnaK hydrolyzes its bound ATP, resulting in the formation of a stable complex. GrpE releases ADP from DnaK; ATP binding to DnaK triggers the release of the substrate protein, thus completing the reaction cycle. Several rounds of ATP-dependent interactions between DnaJ, DnaK and GrpE are required for fully efficient folding. The sequence is that of Protein GrpE from Rickettsia bellii (strain OSU 85-389).